A 300-amino-acid chain; its full sequence is MSARIIDGKAAAARVLGQVRDDVHTLKAEGIEPALAVILVGNDPASEVYIRNKIVRAEEAGIRSLEHRLPADCSEARLLALIAELNTDRSVNGILLQLPLPAHINEAHALQAIAAAKDVDGFHSENVGGLSQGRNVLTPCTPSGCMHLLKETCGDLTGKHAVVIGRSNIVGKPMAALLLQAHCSVTVVHSRSTDAKALCQLADIVVAAVGRPRMIDAGWLKPGAVVIDVGINRIDDQGRSRLVGDVDFDNALDVVSAITPVPGGVGPMTIAFLMKNTVTAARQQAHAQRSQSEAVCLSIY.

NADP(+) contacts are provided by residues 165 to 167 (GRS), serine 190, and isoleucine 231.

This sequence belongs to the tetrahydrofolate dehydrogenase/cyclohydrolase family. In terms of assembly, homodimer.

The catalysed reaction is (6R)-5,10-methylene-5,6,7,8-tetrahydrofolate + NADP(+) = (6R)-5,10-methenyltetrahydrofolate + NADPH. It carries out the reaction (6R)-5,10-methenyltetrahydrofolate + H2O = (6R)-10-formyltetrahydrofolate + H(+). It functions in the pathway one-carbon metabolism; tetrahydrofolate interconversion. Catalyzes the oxidation of 5,10-methylenetetrahydrofolate to 5,10-methenyltetrahydrofolate and then the hydrolysis of 5,10-methenyltetrahydrofolate to 10-formyltetrahydrofolate. The chain is Bifunctional protein FolD 2 from Pseudomonas syringae pv. tomato (strain ATCC BAA-871 / DC3000).